The chain runs to 254 residues: NH(3)-dependent NAD(+) synthetase (254 aa).

32-39 (GISGGIDS) is a binding site for ATP. Mg(2+) is bound at residue Asp-38. Arg-113 serves as a coordination point for deamido-NAD(+). Thr-133 lines the ATP pocket. Residue Glu-138 participates in Mg(2+) binding. Positions 146 and 153 each coordinate deamido-NAD(+). 2 residues coordinate ATP: Lys-162 and Thr-184. 244-245 (HK) serves as a coordination point for deamido-NAD(+).

It belongs to the NAD synthetase family. In terms of assembly, homodimer.

The catalysed reaction is deamido-NAD(+) + NH4(+) + ATP = AMP + diphosphate + NAD(+) + H(+). Its pathway is cofactor biosynthesis; NAD(+) biosynthesis; NAD(+) from deamido-NAD(+) (ammonia route): step 1/1. Functionally, catalyzes the ATP-dependent amidation of deamido-NAD to form NAD. Uses ammonia as a nitrogen source. The protein is NH(3)-dependent NAD(+) synthetase of Thermococcus kodakarensis (strain ATCC BAA-918 / JCM 12380 / KOD1) (Pyrococcus kodakaraensis (strain KOD1)).